The primary structure comprises 648 residues: Transcription termination factor FttA (648 aa).

Residues 9 to 76 form a KHa region; the sequence is DDILKEIREI…ISVRPDPDIL (68 aa). Positions 77–144 are KHb; sequence LPPEKAEELI…WAPRVVRTPP (68 aa). The tract at residues 185–395 is metallo-beta-lactamase N-terminus; sequence WIRITGLGGF…LVMESTYGGS (211 aa). Zn(2+) is bound by residues His253, His255, Asp257, His258, His341, and Asp364. The interval 396 to 589 is beta-Casp; the sequence is NDYQMPREEA…MEVHTIDGFS (194 aa). The metallo-beta-lactamase C-terminus stretch occupies residues 590 to 648; that stretch reads GHADRRELMSYVARVRPRPERIITVHGEAHKCLDLSSSIHKKFGISTRAPNNLDAIRLK. His615 contributes to the Zn(2+) binding site.

This sequence belongs to the metallo-beta-lactamase superfamily. RNA-metabolizing metallo-beta-lactamase-like family. FttA subfamily. As to quaternary structure, homodimer. Probably interacts transiently with RNA polymerase (RNAP), (via at least the RNAP stalk subunits Rpo4 and Rpo7), interacts transiently with the Spt4-Spt5 complex. It depends on Zn(2+) as a cofactor.

With respect to regulation, transcription termination is stimulated by the Spt4-Spt5 complex. Dipicolinic acid inhibits FttA-mediated termination in vitro and inhibits growth in vivo. In terms of biological role, terminates transcription on the whole genome. Termination is linked to FttA-mediated RNA cleavage and does not require NTP hydrolysis. Cleaves endonucleolytically at the RNA exit channel of RNA polymerase (RNAP); the 5'-3' exonuclease activity of this protein degrades the nascent RNA released from RNAP. Functionally, facilitates transcription termination; addition of this factor to stalled transcription elongation complexes (TEC) promotes nascent transcript cleavage and releases RNA polymerase (RNAP) from DNA in vitro. Transcription termination competes with productive transcription elongation. Termination is stimulated by C-rich transcripts and inhibited by G-rich transcripts; the Spt4-Spt5 complex enhances termination on C-less transcripts. Yields an approximately 100 nucleotide RNA, consistent with endonucleolytic cleavage at the RNA exit channel of RNAP. This Thermococcus kodakarensis (strain ATCC BAA-918 / JCM 12380 / KOD1) (Pyrococcus kodakaraensis (strain KOD1)) protein is Transcription termination factor FttA.